A 252-amino-acid chain; its full sequence is Probable S-methyl-5'-thioinosine phosphorylase (252 aa).

Phosphate contacts are provided by residues T8 and R44 to H45. Residue M173 participates in substrate binding. T174 lines the phosphate pocket. N197–A199 contributes to the substrate binding site.

Belongs to the PNP/MTAP phosphorylase family. MTAP subfamily. In terms of assembly, homotrimer.

The enzyme catalyses S-methyl-5'-thioinosine + phosphate = 5-(methylsulfanyl)-alpha-D-ribose 1-phosphate + hypoxanthine. The protein operates within purine metabolism; purine nucleoside salvage. Catalyzes the reversible phosphorylation of S-methyl-5'-thioinosine (MTI) to hypoxanthine and 5-methylthioribose-1-phosphate. Involved in the breakdown of S-methyl-5'-thioadenosine (MTA), a major by-product of polyamine biosynthesis. Catabolism of (MTA) occurs via deamination to MTI and phosphorolysis to hypoxanthine. In Methanocaldococcus jannaschii (strain ATCC 43067 / DSM 2661 / JAL-1 / JCM 10045 / NBRC 100440) (Methanococcus jannaschii), this protein is Probable S-methyl-5'-thioinosine phosphorylase.